A 148-amino-acid chain; its full sequence is MLRLFSSRFYCKIATKSNEKATKLDFKQLTHPTKVPQTPVDSKFPDTSASEIQIDTKTIQLLERLSLVDLDSERALATLKSSIQFADKIAHINTEHVRPLYTVLEHQQLQLRNDQVTEGDCRAEVLRNAKVTDEDYFVSPPGNIPLEQ.

This sequence belongs to the GatC family. In terms of assembly, subunit of the heterotrimeric GatCAB amidotransferase (AdT) complex, composed of A, B and C subunits.

It localises to the mitochondrion. The catalysed reaction is L-glutamyl-tRNA(Gln) + L-glutamine + ATP + H2O = L-glutaminyl-tRNA(Gln) + L-glutamate + ADP + phosphate + H(+). Its function is as follows. Allows the formation of correctly charged Gln-tRNA(Gln) through the transamidation of misacylated Glu-tRNA(Gln) in the mitochondria. The reaction takes place in the presence of glutamine and ATP through an activated gamma-phospho-Glu-tRNA(Gln). The chain is Glutamyl-tRNA(Gln) amidotransferase subunit C, mitochondrial from Drosophila melanogaster (Fruit fly).